The chain runs to 440 residues: Endoplasmic reticulum junction formation protein lunapark (440 aa).

Over 1–45 the chain is Cytoplasmic; sequence MGALLAKWRAKPSTVEVLEKMEKDIQSLEEFRDKNQKLRKIWVAR. A coiled-coil region spans residues 16 to 40; sequence EVLEKMEKDIQSLEEFRDKNQKLRK. Residues 46–66 form a helical membrane-spanning segment; that stretch reads LFFYSTILYILTSLTVYLWYL. Residues 67-77 lie on the Lumenal side of the membrane; sequence PGGMTARLLTT. The helical transmembrane segment at 78–98 threads the bilayer; the sequence is LLFLLFPVLIWFVRTLLILWF. Over 99 to 440 the chain is Cytoplasmic; sequence SRRTERNNDA…ESEESFMETE (342 aa). Residues 100 to 128 are a coiled coil; it reads RRTERNNDALELLKAEKKKILEEVMEKET. The segment at 149-169 is disordered; sequence LELPVPGPPITPRPGQDLRQR. T159 carries the phosphothreonine modification. S177, S179, S188, and S192 each carry phosphoserine. At T198 the chain carries Phosphothreonine. Residues 202-247 are disordered; sequence QRDTSAPGGPPERSVQPTPQSNILQRRPGSPATAVSGMALHPPGPP. A phosphoserine mark is found at S206 and S215. Positions 216-225 are enriched in polar residues; it reads VQPTPQSNIL. The residue at position 219 (T219) is a Phosphothreonine. Phosphoserine is present on residues S222 and S231. A C4-type; plays a role in ER morphology zinc finger spans residues 280 to 305; that stretch reads CQQCFSHNGMALKEEFEYVAFRCAYC. Residues 316-440 are disordered; sequence PQAPRLQEIS…ESEESFMETE (125 aa). A Phosphoserine modification is found at S325. A compositionally biased stretch (polar residues) spans 334 to 343; sequence DSQGSVNTLQ. Acidic residues-rich tracts occupy residues 370 to 411 and 431 to 440; these read QAIE…DDTE and ESEESFMETE.

This sequence belongs to the lunapark family. As to quaternary structure, homodimer; homodimerization requires the C4-type zinc finger motif and decreases during mitosis in a phosphorylation-dependent manner. In terms of processing, phosphorylated. Phosphorylation at Thr-159 and Ser-325 occurs during interphase. Phosphorylation at Ser-177, Ser-179, Ser-188, Ser-192, Thr-198, Ser-206, Ser-215, Thr-219, Ser-222 and Ser-231 occurs during mitosis; these phosphorylations reduce both its homodimerization and the ER three-way tubular junction formation.

The protein localises to the endoplasmic reticulum membrane. In terms of biological role, endoplasmic reticulum (ER)-shaping membrane protein that plays a role in determining ER morphology. Involved in the stabilization of nascent three-way ER tubular junctions within the ER network. May also play a role as a curvature-stabilizing protein within three-way ER tubular junction network. The protein is Endoplasmic reticulum junction formation protein lunapark (lnpk) of Xenopus laevis (African clawed frog).